A 380-amino-acid chain; its full sequence is Cytochrome b (380 aa).

Transmembrane regions (helical) follow at residues Phe-34 to Met-54, Trp-78 to Gly-100, Thr-113 to Val-133, and Phe-179 to Leu-199. Heme b-binding residues include His-84 and His-98. Heme b contacts are provided by His-183 and His-197. Residue His-202 participates in a ubiquinone binding. The next 4 helical transmembrane spans lie at Phe-225–Leu-245, Leu-289–His-309, Val-324–Val-344, and Ile-349–Ile-369.

The protein belongs to the cytochrome b family. The main subunits of complex b-c1 are: cytochrome b, cytochrome c1 and the Rieske protein. It depends on heme b as a cofactor.

Its subcellular location is the mitochondrion inner membrane. Component of the ubiquinol-cytochrome c reductase complex (complex III or cytochrome b-c1 complex) that is part of the mitochondrial respiratory chain. The b-c1 complex mediates electron transfer from ubiquinol to cytochrome c. Contributes to the generation of a proton gradient across the mitochondrial membrane that is then used for ATP synthesis. This Xenoturbella bocki (Marine worm) protein is Cytochrome b (mt:Cyt-b).